Here is a 233-residue protein sequence, read N- to C-terminus: Hydroxyacylglutathione hydrolase (233 aa).

Histidine 52, histidine 54, aspartate 56, histidine 57, histidine 108, aspartate 125, and histidine 163 together coordinate Zn(2+).

It belongs to the metallo-beta-lactamase superfamily. Glyoxalase II family. In terms of assembly, monomer. Zn(2+) serves as cofactor.

The enzyme catalyses an S-(2-hydroxyacyl)glutathione + H2O = a 2-hydroxy carboxylate + glutathione + H(+). The protein operates within secondary metabolite metabolism; methylglyoxal degradation; (R)-lactate from methylglyoxal: step 2/2. Its function is as follows. Thiolesterase that catalyzes the hydrolysis of S-D-lactoyl-glutathione to form glutathione and D-lactic acid. In Actinobacillus succinogenes (strain ATCC 55618 / DSM 22257 / CCUG 43843 / 130Z), this protein is Hydroxyacylglutathione hydrolase.